A 327-amino-acid chain; its full sequence is Putative HTH-type transcriptional regulatory protein MmarC6_0210 (327 aa).

Residues 128-183 (LRETREKLKISVGELAEISRVSRKTIYKYEQNEANPSAEVAIKIEEYLDVPLIKGI) form the HTH cro/C1-type domain. The segment at residues 139–158 (VGELAEISRVSRKTIYKYEQ) is a DNA-binding region (H-T-H motif).

The sequence is that of Putative HTH-type transcriptional regulatory protein MmarC6_0210 from Methanococcus maripaludis (strain C6 / ATCC BAA-1332).